Reading from the N-terminus, the 81-residue chain is MAFLKKSLLLVLFLGLVSLSICEEEKRENEDEEEQEDDEQSEMKRGMWSKIKEAGKAAAKAAAKAAGKAALDVVSGAIGEQ.

The first 22 residues, 1-22 (MAFLKKSLLLVLFLGLVSLSIC), serve as a signal peptide directing secretion. A propeptide spanning residues 23-43 (EEEKRENEDEEEQEDDEQSEM) is cleaved from the precursor. Residues 24 to 46 (EEKRENEDEEEQEDDEQSEMKRG) form a disordered region. Residues 30–40 (EDEEEQEDDEQ) are compositionally biased toward acidic residues. Residue isoleucine 78 is modified to Isoleucine amide. Residues 79 to 81 (GEQ) constitute a propeptide that is removed on maturation.

As to expression, expressed by the skin glands.

Its subcellular location is the secreted. Its function is as follows. Has antibacterial activity against Gram-positive bacterium M.luteus NCT C2665 and against Gram-negative bacterium E.coli K12D31. This Agalychnis callidryas (Red-eyed tree frog) protein is Adenoregulin-related peptide.